Consider the following 139-residue polypeptide: MAVCVAVIAKENYPLYIRSIPTENELKFHYMVHTSLDVVDEKISAMGKALVDQRELYLGLLYPTEDYKVYGYVTNSKVKFVMVVDSSNTALRDNEIRSMFRKLHNSYTDVMCNPFYNPGDRIQSRAFDGMVTSMMIQVC.

Belongs to the TRAPP small subunits family. Sedlin subfamily. As to quaternary structure, component of the multisubunit TRAPP (transport protein particle) complex, which includes at least TRAPPC2, TRAPPC2L, TRAPPC3, TRAPPC3L, TRAPPC4, TRAPPC5, TRAPPC8, TRAPPC9, TRAPPC10, TRAPPC11 and TRAPPC12. Interacts with the heterodimer TRAPPC3-TRAPPC6A.

Its subcellular location is the cytoplasm. It localises to the perinuclear region. The protein resides in the endoplasmic reticulum. The protein localises to the golgi apparatus. In terms of biological role, may play a role in vesicular transport from endoplasmic reticulum to Golgi. The protein is Trafficking protein particle complex subunit 2-like protein (TRAPPC2L) of Bos taurus (Bovine).